We begin with the raw amino-acid sequence, 439 residues long: 26S proteasome regulatory subunit 6A (439 aa).

Methionine 1 carries the N-acetylmethionine modification. Serine 9 is modified (phosphoserine). Residue 227–234 coordinates ATP; it reads GPPGTGKT. The residue at position 376 (serine 376) is a Phosphoserine.

This sequence belongs to the AAA ATPase family. In terms of assembly, component of the 19S proteasome regulatory particle complex. The 26S proteasome consists of a 20S core particle (CP) and two 19S regulatory subunits (RP). The regulatory particle is made of a lid composed of 9 subunits, a base containing 6 ATPases including PSMC3 and few additional components. Interacts with PAAF1. As to quaternary structure, (Microbial infection) Interacts with HIV-1 Tat. Post-translationally, sumoylated by UBE2I in response to MEKK1-mediated stimuli.

The protein resides in the cytoplasm. It localises to the nucleus. Its function is as follows. Component of the 26S proteasome, a multiprotein complex involved in the ATP-dependent degradation of ubiquitinated proteins. This complex plays a key role in the maintenance of protein homeostasis by removing misfolded or damaged proteins, which could impair cellular functions, and by removing proteins whose functions are no longer required. Therefore, the proteasome participates in numerous cellular processes, including cell cycle progression, apoptosis, or DNA damage repair. PSMC3 belongs to the heterohexameric ring of AAA (ATPases associated with diverse cellular activities) proteins that unfolds ubiquitinated target proteins that are concurrently translocated into a proteolytic chamber and degraded into peptides. This Homo sapiens (Human) protein is 26S proteasome regulatory subunit 6A (PSMC3).